The sequence spans 330 residues: Daunorubicin/doxorubicin resistance ATP-binding protein DrrA (330 aa).

Residues 9-239 enclose the ABC transporter domain; it reads IETSGLVKVY…LGSNVLRLRL (231 aa). 41-48 is an ATP binding site; that stretch reads GPNGAGKS.

This sequence belongs to the ABC transporter superfamily. Drug exporter-1 (DrugE1) (TC 3.A.1.105) family. In terms of assembly, the complex is composed of two ATP-binding proteins (DrrA) and two transmembrane proteins (DrrB).

It is found in the cell membrane. It carries out the reaction daunorubicin(in) + ATP + H2O = daunorubicin(out) + ADP + phosphate + H(+). In terms of biological role, part of the ABC transporter complex DrrAB involved in daunorubicin and doxorubicin resistance. Responsible for energy coupling to the transport system. Binds ATP or GTP. This chain is Daunorubicin/doxorubicin resistance ATP-binding protein DrrA (drrA), found in Streptomyces peucetius.